The primary structure comprises 136 residues: Histone H3.2 (136 aa).

Positions 1-45 (MARTKQTARKSTGGKAPRKQLATKAARKSAPATGGVKKPHRYRPG) are disordered. At Arg3 the chain carries Asymmetric dimethylarginine; by PRMT6; alternate. Arg3 is modified (citrulline; alternate). At Thr4 the chain carries Phosphothreonine; by HASPIN and VRK1. At Lys5 the chain carries Allysine; alternate. Residue Lys5 is modified to N6,N6,N6-trimethyllysine; alternate. Residue Lys5 is modified to N6,N6-dimethyllysine; alternate. N6-(2-hydroxyisobutyryl)lysine; alternate is present on Lys5. Position 5 is an N6-(beta-hydroxybutyryl)lysine; alternate (Lys5). Residue Lys5 is modified to N6-acetyllysine; alternate. N6-crotonyllysine; alternate is present on Lys5. Lys5 carries the N6-methyllysine; alternate modification. Position 6 is a 5-glutamyl dopamine; alternate (Gln6). Gln6 carries the post-translational modification 5-glutamyl serotonin; alternate. At Thr7 the chain carries Phosphothreonine; by PKC. The residue at position 9 (Arg9) is a Citrulline; alternate. At Arg9 the chain carries Symmetric dimethylarginine; by PRMT5; alternate. N6,N6,N6-trimethyllysine; alternate is present on Lys10. Residue Lys10 is modified to N6,N6-dimethyllysine; alternate. Position 10 is an N6-(2-hydroxyisobutyryl)lysine; alternate (Lys10). Lys10 carries the N6-(beta-hydroxybutyryl)lysine; alternate modification. Lys10 carries the post-translational modification N6-acetyllysine; alternate. Lys10 carries the post-translational modification N6-crotonyllysine; alternate. Position 10 is an N6-methyllysine; alternate (Lys10). Lys10 carries the N6-lactoyllysine; alternate modification. Ser11 is subject to ADP-ribosylserine; alternate. Position 11 is a phosphoserine; alternate; by AURKB, AURKC, RPS6KA3, RPS6KA4 and RPS6KA5 (Ser11). Thr12 carries the post-translational modification Phosphothreonine; by PKC. Residue Lys15 is modified to N6-(2-hydroxyisobutyryl)lysine; alternate. Lys15 carries the post-translational modification N6-(beta-hydroxybutyryl)lysine; alternate. Lys15 is subject to N6-acetyllysine; alternate. Position 15 is an N6-lactoyllysine; alternate (Lys15). Lys15 carries the N6-glutaryllysine; alternate modification. An N6-succinyllysine; alternate modification is found at Lys15. Arg18 bears the Citrulline; alternate mark. Position 18 is an asymmetric dimethylarginine; by CARM1; alternate (Arg18). N6-(2-hydroxyisobutyryl)lysine; alternate is present on residues Lys19 and Lys24. N6-(beta-hydroxybutyryl)lysine; alternate occurs at positions 19 and 24. N6-acetyllysine; alternate occurs at positions 19 and 24. Residues Lys19 and Lys24 each carry the N6-crotonyllysine; alternate modification. An N6-methyllysine; alternate mark is found at Lys19 and Lys24. Lys19 and Lys24 each carry N6-lactoyllysine; alternate. N6-glutaryllysine; alternate is present on residues Lys19 and Lys24. 2 positions are modified to N6-butyryllysine; alternate: Lys19 and Lys24. Lys19 carries N6-decanoyllysine lipidation. A Citrulline modification is found at Arg27. Residue Lys28 is modified to N6,N6,N6-trimethyllysine; alternate. Lys28 bears the N6,N6-dimethyllysine; alternate mark. At Lys28 the chain carries N6-(2-hydroxyisobutyryl)lysine; alternate. Lys28 carries the post-translational modification N6-acetyllysine; alternate. An N6-crotonyllysine; alternate modification is found at Lys28. N6-methyllysine; alternate is present on Lys28. Lys28 is subject to N6-lactoyllysine; alternate. Lys28 bears the N6-glutaryllysine; alternate mark. Ser29 is modified (ADP-ribosylserine; alternate). Ser29 is modified (phosphoserine; alternate; by AURKB, AURKC and RPS6KA5). An N6,N6,N6-trimethyllysine; alternate modification is found at Lys37. The residue at position 37 (Lys37) is an N6,N6-dimethyllysine; alternate. Lys37 carries the N6-(2-hydroxyisobutyryl)lysine; alternate modification. Lys37 bears the N6-acetyllysine; alternate mark. Position 37 is an N6-methyllysine; alternate (Lys37). Position 38 is an N6-methyllysine (Lys38). Tyr42 is modified (phosphotyrosine). N6,N6,N6-trimethyllysine; alternate is present on Lys57. N6-(2-hydroxyisobutyryl)lysine; alternate is present on Lys57. At Lys57 the chain carries N6-(beta-hydroxybutyryl)lysine; alternate. N6-acetyllysine; alternate is present on Lys57. The residue at position 57 (Lys57) is an N6-crotonyllysine; alternate. The residue at position 57 (Lys57) is an N6-lactoyllysine; alternate. Lys57 is subject to N6-glutaryllysine; alternate. The residue at position 57 (Lys57) is an N6-succinyllysine; alternate. Residue Lys57 is modified to N6-methyllysine; by EHMT2; alternate. Ser58 is subject to Phosphoserine. Residues Lys65 and Lys80 each carry the N6-(2-hydroxyisobutyryl)lysine; alternate modification. Lys65 and Lys80 each carry N6-methyllysine; alternate. Residue Lys80 is modified to N6,N6,N6-trimethyllysine; alternate. Lys80 is modified (N6,N6-dimethyllysine; alternate). The residue at position 80 (Lys80) is an N6-acetyllysine; alternate. Position 80 is an N6-lactoyllysine; alternate (Lys80). Lys80 is modified (N6-glutaryllysine; alternate). Position 80 is an N6-succinyllysine; alternate (Lys80). Thr81 is subject to Phosphothreonine. At Ser87 the chain carries Phosphoserine. At Thr108 the chain carries Phosphothreonine. Residue Cys111 is the site of S-palmitoyl cysteine attachment. N6-acetyllysine; alternate occurs at positions 116 and 123. Lys116 and Lys123 each carry N6-glutaryllysine; alternate. Position 123 is an N6-(2-hydroxyisobutyryl)lysine; alternate (Lys123). Position 123 is an N6-methyllysine; alternate (Lys123). Lys123 bears the N6-succinyllysine; alternate mark.

Belongs to the histone H3 family. As to quaternary structure, the nucleosome is a histone octamer containing two molecules each of H2A, H2B, H3 and H4 assembled in one H3-H4 heterotetramer and two H2A-H2B heterodimers. The octamer wraps approximately 147 bp of DNA. During nucleosome assembly the chaperone ASF1A interacts with the histone H3-H4 heterodimer (via C-terminus of H3); this interaction is direct. Interacts with DNAJC9, CHAF1A and CHAF1B. Interacts with NASP; NASP is a histone chaperone that stabilizes and maintains a soluble pool of Histone H3-H4 dimers. In terms of processing, acetylation is generally linked to gene activation. Acetylation on Lys-10 (H3K9ac) impairs methylation at Arg-9 (H3R8me2s). Acetylation on Lys-19 (H3K18ac) and Lys-24 (H3K24ac) favors methylation at Arg-18 (H3R17me). Acetylation at Lys-123 (H3K122ac) by EP300/p300 plays a central role in chromatin structure: localizes at the surface of the histone octamer and stimulates transcription, possibly by promoting nucleosome instability. Citrullination at Arg-9 (H3R8ci) and/or Arg-18 (H3R17ci) by PADI4 impairs methylation and represses transcription. Post-translationally, asymmetric dimethylation at Arg-18 (H3R17me2a) by CARM1 is linked to gene activation. Symmetric dimethylation at Arg-9 (H3R8me2s) by PRMT5 is linked to gene repression. Asymmetric dimethylation at Arg-3 (H3R2me2a) by PRMT6 is linked to gene repression and is mutually exclusive with H3 Lys-5 methylation (H3K4me2 and H3K4me3). H3R2me2a is present at the 3' of genes regardless of their transcription state and is enriched on inactive promoters, while it is absent on active promoters. In terms of processing, methylation at Lys-5 (H3K4me), Lys-37 (H3K36me) and Lys-80 (H3K79me) are linked to gene activation. Methylation at Lys-5 (H3K4me) facilitates subsequent acetylation of H3 and H4. Methylation at Lys-80 (H3K79me) is associated with DNA double-strand break (DSB) responses and is a specific target for TP53BP1. Methylation at Lys-10 (H3K9me) and Lys-28 (H3K27me) are linked to gene repression. Methylation at Lys-10 (H3K9me) is a specific target for HP1 proteins (CBX1, CBX3 and CBX5) and prevents subsequent phosphorylation at Ser-11 (H3S10ph) and acetylation of H3 and H4. Methylation at Lys-5 (H3K4me) and Lys-80 (H3K79me) require preliminary monoubiquitination of H2B at 'Lys-120'. Methylation at Lys-10 (H3K9me) and Lys-28 (H3K27me) are enriched in inactive X chromosome chromatin. Monomethylation at Lys-57 (H3K56me1) by EHMT2/G9A in G1 phase promotes interaction with PCNA and is required for DNA replication. Phosphorylated at Thr-4 (H3T3ph) by VRK1. Phosphorylated at Thr-4 (H3T3ph) by HASPIN during prophase and dephosphorylated during anaphase. Phosphorylation at Ser-11 (H3S10ph) by AURKB is crucial for chromosome condensation and cell-cycle progression during mitosis and meiosis. In addition phosphorylation at Ser-11 (H3S10ph) by RPS6KA4 and RPS6KA5 is important during interphase because it enables the transcription of genes following external stimulation, like mitogens, stress, growth factors or UV irradiation and result in the activation of genes, such as c-fos and c-jun. Phosphorylation at Ser-11 (H3S10ph), which is linked to gene activation, prevents methylation at Lys-10 (H3K9me) but facilitates acetylation of H3 and H4. Phosphorylation at Ser-11 (H3S10ph) by AURKB mediates the dissociation of HP1 proteins (CBX1, CBX3 and CBX5) from heterochromatin. Phosphorylation at Ser-11 (H3S10ph) is also an essential regulatory mechanism for neoplastic cell transformation. Phosphorylated at Ser-29 (H3S28ph) by MAP3K20 isoform 1, RPS6KA5 or AURKB during mitosis or upon ultraviolet B irradiation. Phosphorylation at Thr-7 (H3T6ph) by PRKCB is a specific tag for epigenetic transcriptional activation that prevents demethylation of Lys-5 (H3K4me) by LSD1/KDM1A. At centromeres, specifically phosphorylated at Thr-12 (H3T11ph) from prophase to early anaphase, by DAPK3 and PKN1. Phosphorylation at Thr-12 (H3T11ph) by PKN1 or isoform M2 of PKM (PKM2) is a specific tag for epigenetic transcriptional activation that promotes demethylation of Lys-10 (H3K9me) by KDM4C/JMJD2C. Phosphorylation at Tyr-42 (H3Y41ph) by JAK2 promotes exclusion of CBX5 (HP1 alpha) from chromatin. Post-translationally, monoubiquitinated by RAG1 in lymphoid cells, monoubiquitination is required for V(D)J recombination. Ubiquitinated by the CUL4-DDB-RBX1 complex in response to ultraviolet irradiation. This may weaken the interaction between histones and DNA and facilitate DNA accessibility to repair proteins. In terms of processing, lysine deamination at Lys-5 (H3K4all) to form allysine is mediated by LOXL2. Allysine formation by LOXL2 only takes place on H3K4me3 and results in gene repression. Crotonylation (Kcr) is specifically present in male germ cells and marks testis-specific genes in post-meiotic cells, including X-linked genes that escape sex chromosome inactivation in haploid cells. Crotonylation marks active promoters and enhancers and confers resistance to transcriptional repressors. It is also associated with post-meiotically activated genes on autosomes. Post-translationally, butyrylation of histones marks active promoters and competes with histone acetylation. It is present during late spermatogenesis. In terms of processing, succinylation at Lys-80 (H3K79succ) by KAT2A takes place with a maximum frequency around the transcription start sites of genes. It gives a specific tag for epigenetic transcription activation. Desuccinylation at Lys-123 (H3K122succ) by SIRT7 in response to DNA damage promotes chromatin condensation and double-strand breaks (DSBs) repair. Serine ADP-ribosylation by PARP1 or PARP2 constitutes the primary form of ADP-ribosylation of proteins in response to DNA damage. Serine ADP-ribosylation at Ser-11 (H3S10ADPr) promotes recruitment of CHD1L. H3S10ADPr is mutually exclusive with phosphorylation at Ser-11 (H3S10ph) and impairs acetylation at Lys-10 (H3K9ac). Post-translationally, serotonylated by TGM2 at Gln-6 (H3Q5ser) during serotonergic neuron differentiation. H3Q5ser is associated with trimethylation of Lys-5 (H3K4me3) and enhances general transcription factor IID (TFIID) complex-binding to H3K4me3, thereby facilitating transcription. In terms of processing, dopaminylated by TGM2 at Gln-6 (H3Q5dop) in ventral tegmental area (VTA) neurons. H3Q5dop mediates neurotransmission-independent role of nuclear dopamine by regulating relapse-related transcriptional plasticity in the reward system. Lactylated in macrophages by EP300/P300 by using lactoyl-CoA directly derived from endogenous or exogenous lactate, leading to stimulates gene transcription.

It is found in the nucleus. The protein localises to the chromosome. Its function is as follows. Core component of nucleosome. Nucleosomes wrap and compact DNA into chromatin, limiting DNA accessibility to the cellular machineries which require DNA as a template. Histones thereby play a central role in transcription regulation, DNA repair, DNA replication and chromosomal stability. DNA accessibility is regulated via a complex set of post-translational modifications of histones, also called histone code, and nucleosome remodeling. The chain is Histone H3.2 from Cricetulus longicaudatus (Long-tailed dwarf hamster).